We begin with the raw amino-acid sequence, 77 residues long: Protein AC145 (77 aa).

It is found in the host nucleus. The protein localises to the virion. Its function is as follows. Plays a role in primary oral infection of the host. This Autographa californica nuclear polyhedrosis virus (AcMNPV) protein is Protein AC145.